A 1134-amino-acid chain; its full sequence is MGKEQELLEAARTGHLPAVEKLLSGKRLSSGFGGGGGGGSGGGGGGSGGGGGGLGSSSHPLSSLLSMWRGPNVNCVDSTGYTPLHHAALNGHKDVVEVLLRNDALTNVADSKGCYPLHLAAWKGDAQIVRLLIHQGPSHTRVNEQNNDNETALHCAAQYGHTEVVKVLLEELTDPTMRNNKFETPLDLAALYGRLEVVKMLLNAHPNLLSCNTKKHTPLHLAARNGHKAVVQVLLDAGMDSNYQTEMGSALHEAALFGKTDVVQILLAAGTDVNIKDNHGLTALDTVRELPSQKSQQIAALIEDHMTGKRSTKEVDKTPPPQPPLISSMDSISQKSQGDVEKAVTELIIDFDANAEEEGPYEALYNAISCHSLDSMASGRSSDQDSTNKEAEAAGVKPAGVRPRERPPPPAKPPPDEEEEDHIDKKYFPLTASEVLSMRPRIHGSAAREEDEHPYELLLTAETKKVVLVDGKTKDHRRSSSSRSQDSAEGQDGQVPEQFSGLLHGSSPVCEVGQDPFQLLCTAGQSHPDGSPQQGACHKASMQLEETGVHAPGASQPSALDQSKRVGYLTGLPTTNSRSHPETLTHTASPHPGGAEEGDRSGARSRAPPTSKPKAELKLSRSLSKSDSDLLTCSPTEDATMGSRSESLSNCSIGKKRLEKSPSFASEWDEIEKIMSSIGEGIDFSQERQKISGLRTLEQSVGEWLESIGLQQYESKLLLNGFDDVHFLGSNVMEEQDLRDIGISDPQHRRKLLQAARSLPKVKALGYDGNSPPSVPSWLDSLGLQDYVHSFLSSGYSSIDTVKNLWELELVNVLKVQLLGHRKRIIASLADRPYEEPPQKPPRFSQLRCQDLLSQTSSPLSQNDSCTGRSADLLLPPGDTGRRRHDSLHDPAAPSRAERFRIQEEHREAKLTLRPPSLAAPYAPVQSWQHQPEKLIFESCGYEANYLGSMLIKDLRGTESTQDACAKMRKSTEHMKKIPTIILSITYKGVKFIDASNKNVIAEHEIRNISCAAQDPEDLCTFAYITKDLQTSHHYCHVFSTVDVNLTYEIILTLGQAFEVAYQLALQAQKSRATGASAAEMIETKSSKPVPKPRVGVRKSALEPPDMDQDAQSHASVSWVVDPKPDSKRSLSTN.

G2 carries the post-translational modification N-acetylglycine. The span at 33-55 (GGGGGGGSGGGGGGSGGGGGGLG) shows a compositional bias: gly residues. Residues 33–57 (GGGGGGGSGGGGGGSGGGGGGLGSS) are disordered. ANK repeat units follow at residues 79-108 (TGYT…LTNV), 112-141 (KGCY…SHTR), 148-177 (DNET…DPTM), 181-210 (KFET…NLLS), 214-243 (KKHT…DSNY), and 246-275 (EMGS…DVNI). Basic and acidic residues predominate over residues 305–317 (HMTGKRSTKEVDK). Disordered stretches follow at residues 305–338 (HMTG…KSQG), 375–422 (SMAS…EEDH), and 469–498 (VDGK…VPEQ). Residue T318 is modified to Phosphothreonine. Residues 328–337 (SMDSISQKSQ) are compositionally biased toward polar residues. Residues 382–392 (SDQDSTNKEAE) show a composition bias toward basic and acidic residues. S507 is modified (phosphoserine). A disordered region spans residues 569–650 (LTGLPTTNSR…MGSRSESLSN (82 aa)). Positions 572–588 (LPTTNSRSHPETLTHTA) are enriched in polar residues. Over residues 613–628 (PKAELKLSRSLSKSDS) the composition is skewed to basic and acidic residues. Phosphoserine occurs at positions 620, 622, 624, 626, 628, 647, 661, 663, 666, and 677. Positions 633-650 (CSPTEDATMGSRSESLSN) are enriched in polar residues. 2 SAM domains span residues 696 to 762 (TLEQ…LPKV) and 770 to 837 (NSPP…YEEP). The segment covering 856-868 (TSSPLSQNDSCTG) has biased composition (polar residues). Disordered regions lie at residues 856–896 (TSSP…APSR) and 1079–1134 (AEMI…LSTN). S887 carries the post-translational modification Phosphoserine. Positions 936–1091 (IFESCGYEAN…IETKSSKPVP (156 aa)) constitute a PID domain. The segment covering 1123–1134 (PKPDSKRSLSTN) has biased composition (basic and acidic residues).

Interacts (via SAM domain) with EPHA2 (via SAM domain). Interacts with EPHA8; EPHA8 kinase activity-independent but stimulated by EPHA8 ubiquitination. Interacts (via SAM domain) with EPHA6 (via SAM domain). Phosphorylated on tyrosine residues in response to EGF and PDGF. In terms of tissue distribution, widely expressed (at protein level).

Its subcellular location is the cytoplasm. The protein resides in the cell projection. Functionally, regulator of different signaling pathways. Regulates EPHA8 receptor tyrosine kinase signaling to control cell migration and neurite retraction. This chain is Ankyrin repeat and SAM domain-containing protein 1A (ANKS1A), found in Homo sapiens (Human).